A 113-amino-acid polypeptide reads, in one-letter code: Large ribosomal subunit protein bL19 (113 aa).

Belongs to the bacterial ribosomal protein bL19 family.

In terms of biological role, this protein is located at the 30S-50S ribosomal subunit interface and may play a role in the structure and function of the aminoacyl-tRNA binding site. The polypeptide is Large ribosomal subunit protein bL19 (Nocardia farcinica (strain IFM 10152)).